A 448-amino-acid chain; its full sequence is Eukaryotic translation initiation factor 3 subunit E (448 aa).

Residues 254–423 (TDLFFSPAYI…GTVIMNHPPQ (170 aa)) enclose the PCI domain.

It belongs to the eIF-3 subunit E family. In terms of assembly, component of the eukaryotic translation initiation factor 3 (eIF-3) complex.

Its subcellular location is the cytoplasm. Its function is as follows. Component of the eukaryotic translation initiation factor 3 (eIF-3) complex, which is involved in protein synthesis of a specialized repertoire of mRNAs and, together with other initiation factors, stimulates binding of mRNA and methionyl-tRNAi to the 40S ribosome. The eIF-3 complex specifically targets and initiates translation of a subset of mRNAs involved in cell proliferation. The protein is Eukaryotic translation initiation factor 3 subunit E (int6) of Emericella nidulans (strain FGSC A4 / ATCC 38163 / CBS 112.46 / NRRL 194 / M139) (Aspergillus nidulans).